The sequence spans 240 residues: 3-dehydroquinate dehydratase (240 aa).

3-dehydroquinate is bound by residues Ser15, 42-44, and Arg73; that span reads EWR. His132 (proton donor/acceptor) is an active-site residue. Catalysis depends on Lys160, which acts as the Schiff-base intermediate with substrate. 3-dehydroquinate-binding residues include Arg202, Ser221, and Gln225.

Belongs to the type-I 3-dehydroquinase family. Homodimer.

The catalysed reaction is 3-dehydroquinate = 3-dehydroshikimate + H2O. The protein operates within metabolic intermediate biosynthesis; chorismate biosynthesis; chorismate from D-erythrose 4-phosphate and phosphoenolpyruvate: step 3/7. Its function is as follows. Involved in the third step of the chorismate pathway, which leads to the biosynthesis of aromatic amino acids. Catalyzes the cis-dehydration of 3-dehydroquinate (DHQ) and introduces the first double bond of the aromatic ring to yield 3-dehydroshikimate. The protein is 3-dehydroquinate dehydratase of Latilactobacillus sakei subsp. sakei (strain 23K) (Lactobacillus sakei subsp. sakei).